The sequence spans 269 residues: MLPYPQIDPVALAIGPLKIHWYGLMYLIGIGGAWLLASRRLNRFDPTWSKEKLSDMVFWMSMGVIVGGRLGYVLFYDLSAYLANPTLIFEVWKGGMSFHGGFIGVMLAAWWFGKRNNKTFFELMDFVAPMVPIGLGAGRIGNFINAELWGKPTDLPWAMVFPPFSDPAQLPRHPSQLYQFALEGVALFLILWLFSRKPRPTMAVSGMFALFYGIFRFIVEFVRVPDAQLGYLAWNWLTMGQVLCVPMILGGLGLIWLAYHRAPAKSAAQ.

The next 7 membrane-spanning stretches (helical) occupy residues 10–30, 56–76, 92–112, 120–140, 174–194, 202–222, and 237–257; these read VALAIGPLKIHWYGLMYLIGI, MVFWMSMGVIVGGRLGYVLFY, WKGGMSFHGGFIGVMLAAWWF, FFELMDFVAPMVPIGLGAGRI, PSQLYQFALEGVALFLILWLF, MAVSGMFALFYGIFRFIVEFV, and LTMGQVLCVPMILGGLGLIWL. R139 contacts a 1,2-diacyl-sn-glycero-3-phospho-(1'-sn-glycerol).

This sequence belongs to the Lgt family.

The protein resides in the cell inner membrane. It carries out the reaction L-cysteinyl-[prolipoprotein] + a 1,2-diacyl-sn-glycero-3-phospho-(1'-sn-glycerol) = an S-1,2-diacyl-sn-glyceryl-L-cysteinyl-[prolipoprotein] + sn-glycerol 1-phosphate + H(+). It functions in the pathway protein modification; lipoprotein biosynthesis (diacylglyceryl transfer). Functionally, catalyzes the transfer of the diacylglyceryl group from phosphatidylglycerol to the sulfhydryl group of the N-terminal cysteine of a prolipoprotein, the first step in the formation of mature lipoproteins. The chain is Phosphatidylglycerol--prolipoprotein diacylglyceryl transferase from Pseudomonas fluorescens (strain ATCC BAA-477 / NRRL B-23932 / Pf-5).